Here is a 578-residue protein sequence, read N- to C-terminus: A-type ATP synthase subunit A (578 aa).

An ATP-binding site is contributed by 228 to 235; it reads GPFGSGKT.

It belongs to the ATPase alpha/beta chains family. Has multiple subunits with at least A(3), B(3), C, D, E, F, H, I and proteolipid K(x).

The protein resides in the cell membrane. The enzyme catalyses ATP + H2O + 4 H(+)(in) = ADP + phosphate + 5 H(+)(out). Component of the A-type ATP synthase that produces ATP from ADP in the presence of a proton gradient across the membrane. The A chain is the catalytic subunit. This Methanosarcina acetivorans (strain ATCC 35395 / DSM 2834 / JCM 12185 / C2A) protein is A-type ATP synthase subunit A.